Here is a 249-residue protein sequence, read N- to C-terminus: Triosephosphate isomerase (249 aa).

Residue 9–11 (NWK) participates in substrate binding. Catalysis depends on His-94, which acts as the Electrophile. Catalysis depends on Glu-166, which acts as the Proton acceptor. Substrate-binding positions include Gly-172 and 232-233 (GG).

This sequence belongs to the triosephosphate isomerase family. Homodimer.

It localises to the cytoplasm. The catalysed reaction is D-glyceraldehyde 3-phosphate = dihydroxyacetone phosphate. Its pathway is carbohydrate biosynthesis; gluconeogenesis. The protein operates within carbohydrate degradation; glycolysis; D-glyceraldehyde 3-phosphate from glycerone phosphate: step 1/1. Involved in the gluconeogenesis. Catalyzes stereospecifically the conversion of dihydroxyacetone phosphate (DHAP) to D-glyceraldehyde-3-phosphate (G3P). This chain is Triosephosphate isomerase, found in Xylella fastidiosa (strain M23).